The sequence spans 110 residues: uncharacterized protein (110 aa).

Residues 88–108 (LTRICLLIFGIGLVVLIFLKL) traverse the membrane as a helical segment.

Its subcellular location is the membrane. This is an uncharacterized protein from Rickettsia prowazekii (strain Madrid E).